The primary structure comprises 141 residues: ATP synthase F(0) complex subunit C3, mitochondrial (141 aa).

The transit peptide at 1 to 66 directs the protein to the mitochondrion; it reads MFACAKLART…REFQTSVISR (66 aa). Residues 82-102 traverse the membrane as a helical segment; sequence VGVAGSGAGIGTVFGSLIIGY. K109 is subject to N6,N6,N6-trimethyllysine. Residues 117–137 traverse the membrane as a helical segment; that stretch reads ILGFALSEAMGLFCLMVAFLI.

The protein belongs to the ATPase C chain family. In terms of assembly, F-type ATPases have 2 components, CF(1) - the catalytic core - and CF(0) - the membrane proton channel. CF(1) has five subunits: alpha(3), beta(3), gamma(1), delta(1), epsilon(1). CF(0) has three main subunits: a, b and c. Interacts with TMEM70 and TMEM242. In terms of processing, trimethylated by ATPSCKMT at Lys-109. Methylation is required for proper incorporation of the C subunit into the ATP synthase complex and mitochondrial respiration.

It localises to the mitochondrion membrane. Mitochondrial membrane ATP synthase (F(1)F(0) ATP synthase or Complex V) produces ATP from ADP in the presence of a proton gradient across the membrane which is generated by electron transport complexes of the respiratory chain. F-type ATPases consist of two structural domains, F(1) - containing the extramembraneous catalytic core and F(0) - containing the membrane proton channel, linked together by a central stalk and a peripheral stalk. During catalysis, ATP synthesis in the catalytic domain of F(1) is coupled via a rotary mechanism of the central stalk subunits to proton translocation. Part of the complex F(0) domain. A homomeric c-ring of probably 10 subunits is part of the complex rotary element. The sequence is that of ATP synthase F(0) complex subunit C3, mitochondrial from Mus musculus (Mouse).